We begin with the raw amino-acid sequence, 588 residues long: Catechol oxidase B, chloroplastic (588 aa).

Residues 1 to 88 (SSSSTTTIPL…AANLAPLASA (88 aa)) constitute a chloroplast transit peptide. Cystine bridges form between Cys99/Cys115 and Cys114/Cys181. Positions 180, 198, 207, 329, 333, and 364 each coordinate Cu cation. The 2'-(S-cysteinyl)-histidine (Cys-His) cross-link spans 184–198 (CNGAYKVGGKELQVH).

Belongs to the tyrosinase family. Cu(2+) serves as cofactor.

The protein resides in the plastid. It localises to the chloroplast thylakoid lumen. The enzyme catalyses 2 catechol + O2 = 2 1,2-benzoquinone + 2 H2O. Its function is as follows. Catalyzes the oxidation of mono- and o-diphenols to o-diquinones. This Solanum tuberosum (Potato) protein is Catechol oxidase B, chloroplastic.